The sequence spans 310 residues: Endo-1,4-beta-xylanase B (310 aa).

Residues M1–A19 form the signal peptide. A GH11 domain is found at A33 to S223. E119 (nucleophile) is an active-site residue. E210 acts as the Proton donor in catalysis. Residues A218–S227 are compositionally biased toward low complexity. A disordered region spans residues A218–G274. A compositionally biased stretch (gly residues) spans S228–S246. Residues G247–S256 show a composition bias toward low complexity. A compositionally biased stretch (gly residues) spans T257–G274. The 36-residue stretch at N275–L310 folds into the CBM1 domain.

It belongs to the glycosyl hydrolase 11 (cellulase G) family.

The protein localises to the secreted. The catalysed reaction is Endohydrolysis of (1-&gt;4)-beta-D-xylosidic linkages in xylans.. Its pathway is glycan degradation; xylan degradation. Endo-1,4-beta-xylanase involved in the hydrolysis of xylan, a major structural heterogeneous polysaccharide found in plant biomass representing the second most abundant polysaccharide in the biosphere, after cellulose. Hydrolyzes birchwood xylan, beechwood xylan, and oat spelt xylan to produce short-chain xylooligosaccharides, xylopentaose, xylotriose, and xylobiose as the main products. This chain is Endo-1,4-beta-xylanase B (xynB), found in Penicillium oxalicum.